Consider the following 211-residue polypeptide: MAQAIIGAIAASAAGSALGAGIQAGAEAALQSQRYQQDLALQRNTFEHDKDMLSYQVQASNALLAKNLNTRYSMLIAGGLSSADASRAVAGAPVTRLIDWNGTRVAAPRSSATTLRSGGFMAVPMPVQPKSKTPQSSGFSNPAYDMSTVSSRTSSWVQSQNSLRSVSPFHRQALQTVWVTPPGSTSSSSVSSTPYGVFNTDRMPLFANLRR.

Belongs to the norovirus VP2 family. As to quaternary structure, homooligomer. The portal-like structure consists in 12 copies of VP2. Interacts with capsid protein VP1.

Its subcellular location is the virion. The protein resides in the host cytoplasm. Minor structural protein that forms a portal-like structure at a unique three-fold axis of symmetry, following binding to the host receptor. The channel formed by VP2 may allow the delivery of the viral genome through the host endosomal membrane. This is Minor capsid protein VP2 from Homo sapiens (Human).